We begin with the raw amino-acid sequence, 597 residues long: Exochitinase 1 (597 aa).

A signal peptide (or 32) is located at residues 1 to 29 (MDRFRPLAVLIAAALTLSGTTALSSAARA). Residues 172–253 (PPTGLRTGSV…ATVTATTAPG (82 aa)) form the Fibronectin type-III domain. Residues 264–597 (HALVGYLHAS…FQRTFDGYFG (334 aa)) enclose the GH18 domain. The active-site Proton donor is Glu384.

This sequence belongs to the glycosyl hydrolase 18 family. Chitinase class II subfamily. Post-translationally, the N-terminus is blocked.

It carries out the reaction Random endo-hydrolysis of N-acetyl-beta-D-glucosaminide (1-&gt;4)-beta-linkages in chitin and chitodextrins.. Inhibited by the pseudosugar allosamidin A. Exochitinase that generates exclusively chitobiose from chitotetraose, chitohexaose, and colloidal high-molecular mass chitin. In Streptomyces olivaceoviridis (Streptomyces corchorusii), this protein is Exochitinase 1 (chi01).